Consider the following 729-residue polypeptide: 1,4-alpha-glucan branching enzyme GlgB (729 aa).

D409 serves as the catalytic Nucleophile. E462 acts as the Proton donor in catalysis.

Belongs to the glycosyl hydrolase 13 family. GlgB subfamily. As to quaternary structure, monomer.

The catalysed reaction is Transfers a segment of a (1-&gt;4)-alpha-D-glucan chain to a primary hydroxy group in a similar glucan chain.. It functions in the pathway glycan biosynthesis; glycogen biosynthesis. Functionally, catalyzes the formation of the alpha-1,6-glucosidic linkages in glycogen by scission of a 1,4-alpha-linked oligosaccharide from growing alpha-1,4-glucan chains and the subsequent attachment of the oligosaccharide to the alpha-1,6 position. This is 1,4-alpha-glucan branching enzyme GlgB from Saccharophagus degradans (strain 2-40 / ATCC 43961 / DSM 17024).